A 211-amino-acid polypeptide reads, in one-letter code: Redox-sensing transcriptional repressor Rex (211 aa).

The segment at residues 16–55 (LYYRYLLILNEEGKDKVSSTELSEAVQVDSASIRRDFSYF) is a DNA-binding region (H-T-H motif). 90-95 (GVGNLG) lines the NAD(+) pocket.

The protein belongs to the transcriptional regulatory Rex family. Homodimer.

It is found in the cytoplasm. In terms of biological role, modulates transcription in response to changes in cellular NADH/NAD(+) redox state. This chain is Redox-sensing transcriptional repressor Rex, found in Lactobacillus acidophilus (strain ATCC 700396 / NCK56 / N2 / NCFM).